Reading from the N-terminus, the 1195-residue chain is DNA-directed RNA polymerase subunit Rpo2 (1195 aa).

Residues 894-909 (LEEGEERLGPQRRRES) show a composition bias toward basic and acidic residues. The segment at 894–914 (LEEGEERLGPQRRRESSVTMR) is disordered. Zn(2+) is bound by residues Cys1135, Cys1140, Cys1155, and Cys1158.

Belongs to the RNA polymerase beta chain family. As to quaternary structure, part of the RNA polymerase complex. Requires Zn(2+) as cofactor.

It is found in the cytoplasm. The enzyme catalyses RNA(n) + a ribonucleoside 5'-triphosphate = RNA(n+1) + diphosphate. In terms of biological role, DNA-dependent RNA polymerase (RNAP) catalyzes the transcription of DNA into RNA using the four ribonucleoside triphosphates as substrates. This subunit is involved in DNA promoter recognition. The sequence is that of DNA-directed RNA polymerase subunit Rpo2 from Thermoplasma acidophilum (strain ATCC 25905 / DSM 1728 / JCM 9062 / NBRC 15155 / AMRC-C165).